Here is a 453-residue protein sequence, read N- to C-terminus: MTTDTIVAQATAPGRGGVGIIRVSGPQAAQVALEVTGKTLKARYAEYLPFKAQDGSELDQGIALFFPNPHSFTGEDVLELQGHGGPVVMDMLIKRILTISGVRPARPGEFSERAFLNDKMDLTQAEAIADLIDASSEEAAKSALQSLQGQFSKRIHTLVESLIHLRIYVEAAIDFPEEEIDFLADGKVAGDLQAIIDNLDAVRKEANQGAIMREGMKVVIAGRPNAGKSSLLNALSGKDSAIVTDIAGTTRDVLREHIHIDGMPLHIIDTAGLRDASDEVEKIGIERAWDEIRQADRVLFMVDGTTTDATDPKEIWPDFIDRLPEQIGITVIRNKADQTQESLGICHVSQPTLIRLSAKTGQGVEALRNHLKECMGFSGNSEGGFMARRRHLDALQRAAEHLLIGQEQLEGYMAGEILAEELRIAQQHLNEITGEFSSDDLLGRIFSSFCIGK.

(6S)-5-formyl-5,6,7,8-tetrahydrofolate-binding residues include R22, E79, and K119. A TrmE-type G domain is found at 215–376 (GMKVVIAGRP…LRNHLKECMG (162 aa)). K(+) is bound at residue N225. Residues 225–230 (NAGKSS), 244–250 (TDIAGTT), 269–272 (DTAG), and 334–337 (NKAD) contribute to the GTP site. S229 is a binding site for Mg(2+). K(+) is bound by residues T244, I246, and T249. T250 is a Mg(2+) binding site. Residue K453 coordinates (6S)-5-formyl-5,6,7,8-tetrahydrofolate.

Belongs to the TRAFAC class TrmE-Era-EngA-EngB-Septin-like GTPase superfamily. TrmE GTPase family. Homodimer. Heterotetramer of two MnmE and two MnmG subunits. It depends on K(+) as a cofactor.

It localises to the cytoplasm. Exhibits a very high intrinsic GTPase hydrolysis rate. Involved in the addition of a carboxymethylaminomethyl (cmnm) group at the wobble position (U34) of certain tRNAs, forming tRNA-cmnm(5)s(2)U34. In Vibrio vulnificus (strain YJ016), this protein is tRNA modification GTPase MnmE.